The sequence spans 268 residues: Type III pantothenate kinase (268 aa).

Position 6-13 (aspartate 6–valine 13) interacts with ATP. Substrate contacts are provided by residues tyrosine 100 and glycine 107–arginine 110. Aspartate 109 serves as the catalytic Proton acceptor. Residue aspartate 129 participates in K(+) binding. Residue threonine 132 participates in ATP binding. Threonine 184 is a binding site for substrate.

The protein belongs to the type III pantothenate kinase family. As to quaternary structure, homodimer. NH4(+) serves as cofactor. K(+) is required as a cofactor.

The protein resides in the cytoplasm. The enzyme catalyses (R)-pantothenate + ATP = (R)-4'-phosphopantothenate + ADP + H(+). It functions in the pathway cofactor biosynthesis; coenzyme A biosynthesis; CoA from (R)-pantothenate: step 1/5. Functionally, catalyzes the phosphorylation of pantothenate (Pan), the first step in CoA biosynthesis. This Alkaliphilus metalliredigens (strain QYMF) protein is Type III pantothenate kinase.